The primary structure comprises 427 residues: Ribosomal protein uS12 methylthiotransferase RimO (427 aa).

Residues 1 to 116 enclose the MTTase N-terminal domain; sequence MNFYVEVLGC…IATHIGKRNV (116 aa). Positions 10, 46, 79, 145, 149, and 152 each coordinate [4Fe-4S] cluster. One can recognise a Radical SAM core domain in the interval 131–360; sequence VDNGQYAYVK…MDIQSQISFE (230 aa). The 64-residue stretch at 363 to 426 folds into the TRAM domain; the sequence is EKLVGKKLKV…IYDLEGEIVE (64 aa).

Belongs to the methylthiotransferase family. RimO subfamily. [4Fe-4S] cluster is required as a cofactor.

The protein resides in the cytoplasm. The catalysed reaction is L-aspartate(89)-[ribosomal protein uS12]-hydrogen + (sulfur carrier)-SH + AH2 + 2 S-adenosyl-L-methionine = 3-methylsulfanyl-L-aspartate(89)-[ribosomal protein uS12]-hydrogen + (sulfur carrier)-H + 5'-deoxyadenosine + L-methionine + A + S-adenosyl-L-homocysteine + 2 H(+). In terms of biological role, catalyzes the methylthiolation of an aspartic acid residue of ribosomal protein uS12. This Thermosipho melanesiensis (strain DSM 12029 / CIP 104789 / BI429) protein is Ribosomal protein uS12 methylthiotransferase RimO.